The chain runs to 287 residues: Bifunctional protein FolD (287 aa).

NADP(+) is bound by residues 169 to 171 (GRS) and Ser194.

It belongs to the tetrahydrofolate dehydrogenase/cyclohydrolase family. As to quaternary structure, homodimer.

It catalyses the reaction (6R)-5,10-methylene-5,6,7,8-tetrahydrofolate + NADP(+) = (6R)-5,10-methenyltetrahydrofolate + NADPH. It carries out the reaction (6R)-5,10-methenyltetrahydrofolate + H2O = (6R)-10-formyltetrahydrofolate + H(+). It participates in one-carbon metabolism; tetrahydrofolate interconversion. Its function is as follows. Catalyzes the oxidation of 5,10-methylenetetrahydrofolate to 5,10-methenyltetrahydrofolate and then the hydrolysis of 5,10-methenyltetrahydrofolate to 10-formyltetrahydrofolate. The polypeptide is Bifunctional protein FolD (Albidiferax ferrireducens (strain ATCC BAA-621 / DSM 15236 / T118) (Rhodoferax ferrireducens)).